The following is a 247-amino-acid chain: Ribonuclease 3 (247 aa).

Residues Leu5–Gly147 enclose the RNase III domain. Glu40 provides a ligand contact to Mg(2+). Residue Asp44 is part of the active site. A disordered region spans residues Gln104–Gly124. Residues Asp133 and Glu136 each contribute to the Mg(2+) site. Glu136 is an active-site residue. Residues Asp174 to Ala244 enclose the DRBM domain.

It belongs to the ribonuclease III family. As to quaternary structure, homodimer. Requires Mg(2+) as cofactor.

The protein localises to the cytoplasm. The enzyme catalyses Endonucleolytic cleavage to 5'-phosphomonoester.. In terms of biological role, digests double-stranded RNA. Involved in the processing of primary rRNA transcript to yield the immediate precursors to the large and small rRNAs (23S and 16S). Processes some mRNAs, and tRNAs when they are encoded in the rRNA operon. Processes pre-crRNA and tracrRNA of type II CRISPR loci if present in the organism. In Verminephrobacter eiseniae (strain EF01-2), this protein is Ribonuclease 3.